The following is a 305-amino-acid chain: Oxygen-dependent coproporphyrinogen-III oxidase (305 aa).

Serine 93 serves as a coordination point for substrate. Histidine 97 and histidine 107 together coordinate a divalent metal cation. Histidine 107 serves as the catalytic Proton donor. A substrate-binding site is contributed by 109 to 111 (NVR). Histidine 146 and histidine 176 together coordinate a divalent metal cation. The segment at 241–276 (YVEFNLVYDRGTLFGLQSGGRTESILMSLPPQVRWG) is important for dimerization. Substrate is bound at residue 259-261 (GGR).

The protein belongs to the aerobic coproporphyrinogen-III oxidase family. As to quaternary structure, homodimer. A divalent metal cation serves as cofactor.

It localises to the cytoplasm. The catalysed reaction is coproporphyrinogen III + O2 + 2 H(+) = protoporphyrinogen IX + 2 CO2 + 2 H2O. Its pathway is porphyrin-containing compound metabolism; protoporphyrin-IX biosynthesis; protoporphyrinogen-IX from coproporphyrinogen-III (O2 route): step 1/1. In terms of biological role, involved in the heme biosynthesis. Catalyzes the aerobic oxidative decarboxylation of propionate groups of rings A and B of coproporphyrinogen-III to yield the vinyl groups in protoporphyrinogen-IX. This chain is Oxygen-dependent coproporphyrinogen-III oxidase, found in Pseudomonas fluorescens (strain ATCC BAA-477 / NRRL B-23932 / Pf-5).